Consider the following 671-residue polypeptide: DNA ligase (671 aa).

NAD(+) is bound by residues 32–36 (DAEYD), 81–82 (SL), and Glu113. The active-site N6-AMP-lysine intermediate is Lys115. Residues Arg136, Glu173, Lys290, and Lys314 each coordinate NAD(+). Zn(2+) contacts are provided by Cys408, Cys411, Cys426, and Cys432. Positions 593 to 671 (EIDSPFAGKT…EAEMIRLLDA (79 aa)) constitute a BRCT domain.

It belongs to the NAD-dependent DNA ligase family. LigA subfamily. Mg(2+) is required as a cofactor. The cofactor is Mn(2+).

It catalyses the reaction NAD(+) + (deoxyribonucleotide)n-3'-hydroxyl + 5'-phospho-(deoxyribonucleotide)m = (deoxyribonucleotide)n+m + AMP + beta-nicotinamide D-nucleotide.. In terms of biological role, DNA ligase that catalyzes the formation of phosphodiester linkages between 5'-phosphoryl and 3'-hydroxyl groups in double-stranded DNA using NAD as a coenzyme and as the energy source for the reaction. It is essential for DNA replication and repair of damaged DNA. This is DNA ligase from Salmonella schwarzengrund (strain CVM19633).